The chain runs to 189 residues: Glycerol-3-phosphate acyltransferase (189 aa).

Transmembrane regions (helical) follow at residues 1-21 (MFWS…AIVL), 50-70 (KLAI…VLLA), 81-101 (AWVG…RFQG), 111-131 (MLMA…VLTF), and 151-171 (LLAW…LMIV).

Belongs to the PlsY family. As to quaternary structure, probably interacts with PlsX.

It localises to the cell inner membrane. It catalyses the reaction an acyl phosphate + sn-glycerol 3-phosphate = a 1-acyl-sn-glycero-3-phosphate + phosphate. Its pathway is lipid metabolism; phospholipid metabolism. Its function is as follows. Catalyzes the transfer of an acyl group from acyl-phosphate (acyl-PO(4)) to glycerol-3-phosphate (G3P) to form lysophosphatidic acid (LPA). This enzyme utilizes acyl-phosphate as fatty acyl donor, but not acyl-CoA or acyl-ACP. In Pseudomonas entomophila (strain L48), this protein is Glycerol-3-phosphate acyltransferase.